A 67-amino-acid polypeptide reads, in one-letter code: Potassium channel toxin alpha-KTx (67 aa).

The first 25 residues, 1–25 (MKNIAMKTTVVLTILLLSVLTAINA), serve as a signal peptide directing secretion. The propeptide occupies 26–31 (DTMKKR). 4 cysteine pairs are disulfide-bonded: Cys-35–Cys-54, Cys-40–Cys-59, Cys-44–Cys-61, and Cys-49–Cys-64.

This sequence belongs to the short scorpion toxin superfamily. Potassium channel inhibitor family. In terms of tissue distribution, expressed by the venom gland.

Its subcellular location is the secreted. Functionally, blocks Kv1.1/KCNA1, Kv1.2/KCNA2 and Kv1.3/KCNA3 voltage-gated potassium channels. This is Potassium channel toxin alpha-KTx from Hoffmannihadrurus gertschi (Scorpion).